Here is a 225-residue protein sequence, read N- to C-terminus: Thymidylate kinase (225 aa).

12-19 lines the ATP pocket; the sequence is GGEGAGKS.

This sequence belongs to the thymidylate kinase family.

It catalyses the reaction dTMP + ATP = dTDP + ADP. Functionally, phosphorylation of dTMP to form dTDP in both de novo and salvage pathways of dTTP synthesis. The chain is Thymidylate kinase from Chelativorans sp. (strain BNC1).